Reading from the N-terminus, the 367-residue chain is MMETQLYIGIMSGTSMDGADAVLIRMDGGKWLGAEGHAFTPYPGRLRRQLLDLQDTGADELHRSRILSQELSRLYAQTAAELLCSQNLAPSDITALGCHGQTVRHAPEHGYSIQLADLPLLAERTRIFTVGDFRSRDLAAGGQGAPLVPAFHEALFRDNRETRAVLNIGGIANISVLPPDAPAFGFDTGPGNMLMDAWTQAHWQLPYDKNGAKAAQGNILPQLLDRLLAHPYFAQPHPKSTGRELFALNWLETYLDGGENRYDVLRTLSRFTAQTVCDAVSHAAADARQMYICGGGIRNPVLMADLAECFGTRVSLHSTADLNLDPQWVEAAAFAWLAACWINRIPGSPHKATGASKPCILGAGYYY.

ATP is bound at residue 13 to 20 (GTSMDGAD).

Belongs to the anhydro-N-acetylmuramic acid kinase family.

It catalyses the reaction 1,6-anhydro-N-acetyl-beta-muramate + ATP + H2O = N-acetyl-D-muramate 6-phosphate + ADP + H(+). The protein operates within amino-sugar metabolism; 1,6-anhydro-N-acetylmuramate degradation. Its pathway is cell wall biogenesis; peptidoglycan recycling. Catalyzes the specific phosphorylation of 1,6-anhydro-N-acetylmuramic acid (anhMurNAc) with the simultaneous cleavage of the 1,6-anhydro ring, generating MurNAc-6-P. Is required for the utilization of anhMurNAc either imported from the medium or derived from its own cell wall murein, and thus plays a role in cell wall recycling. In Neisseria meningitidis serogroup B (strain ATCC BAA-335 / MC58), this protein is Anhydro-N-acetylmuramic acid kinase.